A 316-amino-acid polypeptide reads, in one-letter code: Ribosomal protein L11 methyltransferase (316 aa).

Residues T157, G178, D200, and N243 each contribute to the S-adenosyl-L-methionine site.

Belongs to the methyltransferase superfamily. PrmA family.

It is found in the cytoplasm. It catalyses the reaction L-lysyl-[protein] + 3 S-adenosyl-L-methionine = N(6),N(6),N(6)-trimethyl-L-lysyl-[protein] + 3 S-adenosyl-L-homocysteine + 3 H(+). Functionally, methylates ribosomal protein L11. This chain is Ribosomal protein L11 methyltransferase, found in Streptococcus pneumoniae (strain P1031).